Consider the following 458-residue polypeptide: MASEDKKSKREHIIHFEDTASKSLDEVNGSVEVPHNAGFWKTLAAYTGPGILVAVGYMDPGNWITSIAGGASFKYSLLSVILISSLIAMLLQAMAARLGIVTGRDLAQMTRDHTSKAMGGFLWVITELAIMATDIAEIIGSAIALKLLFNMPLIVGIIITTADVLILLLLMRLGFRKIEAVVATLVLVILLVFAYEVILAQPNVPELLKGYLPHADIVTNKSMLYLSLGIVGATVMPHDLFLGSSISQTRKIDRTKHEEVKKAIKFSTIDSNLQLTMAFIVNSLLLILGAALFFGTSSSVGRFVDLFNALSNSQIVGAIASPMLSMLFAVALLASGQSSTITGTLAGQIIMEGFIHLKMPLWAQRLLTRLMSVTPVLIFAIYYHGNEAKIENLLTFSQVFLSIALPFAVIPLVLYTSDKKIMGEFANRAWVKWTAWFISGVLIILNLYLIAQTLGFVK.

11 helical membrane-spanning segments follow: residues 38 to 58, 76 to 96, 119 to 139, 151 to 171, 180 to 200, 223 to 243, 275 to 295, 315 to 335, 370 to 390, 393 to 413, and 437 to 457; these read GFWK…VGYM, SLLS…AMAA, GGFL…AEII, MPLI…LLLM, AVVA…VILA, MLYL…LFLG, LTMA…LFFG, IVGA…LLAS, LMSV…EAKI, LLTF…IPLV, and FISG…LGFV.

This sequence belongs to the NRAMP family.

The protein resides in the cell membrane. Functionally, h(+)-stimulated, divalent metal cation uptake system. The sequence is that of Divalent metal cation transporter MntH from Lacticaseibacillus paracasei (strain ATCC 334 / BCRC 17002 / CCUG 31169 / CIP 107868 / KCTC 3260 / NRRL B-441) (Lactobacillus paracasei).